Reading from the N-terminus, the 557-residue chain is Formate--tetrahydrofolate ligase (557 aa).

67 to 74 is a binding site for ATP; it reads TPAGEGKS.

This sequence belongs to the formate--tetrahydrofolate ligase family.

It carries out the reaction (6S)-5,6,7,8-tetrahydrofolate + formate + ATP = (6R)-10-formyltetrahydrofolate + ADP + phosphate. It participates in one-carbon metabolism; tetrahydrofolate interconversion. The polypeptide is Formate--tetrahydrofolate ligase (Lacticaseibacillus paracasei (strain ATCC 334 / BCRC 17002 / CCUG 31169 / CIP 107868 / KCTC 3260 / NRRL B-441) (Lactobacillus paracasei)).